The chain runs to 323 residues: tRNA dimethylallyltransferase (323 aa).

Residue 12–19 (GPTAAGKT) participates in ATP binding. Residue 14-19 (TAAGKT) coordinates substrate. 2 interaction with substrate tRNA regions span residues 37 to 40 (DSAL) and 161 to 165 (QRLIR).

This sequence belongs to the IPP transferase family. Monomer. Mg(2+) is required as a cofactor.

It catalyses the reaction adenosine(37) in tRNA + dimethylallyl diphosphate = N(6)-dimethylallyladenosine(37) in tRNA + diphosphate. Its function is as follows. Catalyzes the transfer of a dimethylallyl group onto the adenine at position 37 in tRNAs that read codons beginning with uridine, leading to the formation of N6-(dimethylallyl)adenosine (i(6)A). The polypeptide is tRNA dimethylallyltransferase (Pseudomonas syringae pv. tomato (strain ATCC BAA-871 / DC3000)).